The primary structure comprises 191 residues: Decorin-binding protein A (191 aa).

A signal peptide spans 1-29; sequence MIKCNNKTFNNLLKLTILVNLLISCGLTG.

It belongs to the decorin-binding protein family.

Binds to decorin which may mediate the adherence of B.burgdorferi to collagen fibers in skin and other tissues. In Borreliella burgdorferi (strain ATCC 35210 / DSM 4680 / CIP 102532 / B31) (Borrelia burgdorferi), this protein is Decorin-binding protein A (dbpA).